The following is a 208-amino-acid chain: High frequency lysogenization protein HflD homolog (208 aa).

The protein belongs to the HflD family.

It localises to the cytoplasm. The protein localises to the cell inner membrane. The polypeptide is High frequency lysogenization protein HflD homolog (Pseudomonas putida (strain ATCC 700007 / DSM 6899 / JCM 31910 / BCRC 17059 / LMG 24140 / F1)).